The primary structure comprises 92 residues: Serine protease inhibitor I/II (92 aa).

An N-terminal signal peptide occupies residues 1–19; it reads MKLALALCAAFLLVVLVQA. Pacifastin domains lie at 20–54 and 57–92; these read EQEC…CPPH and EVTC…CPQK. 6 disulfides stabilise this stretch: Cys23/Cys38, Cys33/Cys51, Cys36/Cys46, Cys60/Cys75, Cys70/Cys89, and Cys73/Cys84.

Belongs to the protease inhibitor I19 family. Expressed in hemolymph, ovaries, testes and fat body of adults but are absent in the gut. Also present in larval hemolymph and fat body.

It localises to the secreted. In vitro, is active against alpha-chymotrypsin and trypsin. In terms of biological role, in vitro, is active against alpha-chymotrypsin and pancreatic elastase. The polypeptide is Serine protease inhibitor I/II (Schistocerca gregaria (Desert locust)).